A 259-amino-acid polypeptide reads, in one-letter code: Synaptophysin-like protein 1 (259 aa).

At methionine 1 to leucine 33 the chain is on the cytoplasmic side. In terms of domain architecture, MARVEL spans proline 28 to serine 237. Residues glycine 34 to phenylalanine 54 traverse the membrane as a helical segment. Over lysine 55–glutamine 116 the chain is Vesicular. N-linked (GlcNAc...) asparagine glycosylation is present at asparagine 71. Residues phenylalanine 117–valine 137 form a helical membrane-spanning segment. The Cytoplasmic portion of the chain corresponds to glycine 138–proline 150. The chain crosses the membrane as a helical span at residues methionine 151–tryptophan 171. The Vesicular segment spans residues alanine 172–asparagine 212. N-linked (GlcNAc...) asparagine glycosylation is present at asparagine 212. Residues valine 213–tyrosine 233 form a helical membrane-spanning segment. Over lysine 234–isoleucine 259 the chain is Cytoplasmic.

The protein belongs to the synaptophysin/synaptobrevin family.

The protein resides in the cytoplasmic vesicle membrane. It is found in the melanosome. This Homo sapiens (Human) protein is Synaptophysin-like protein 1 (SYPL1).